The primary structure comprises 464 residues: E3 ubiquitin-protein ligase parkin (464 aa).

Residues 1–76 (MIVFVRFNSS…VHIVQRPRRR (76 aa)) enclose the Ubiquitin-like domain. A Phosphoserine; by PINK1 modification is found at Ser-65. The segment at 70 to 96 (VQRPRRRSHETNASGGDEPQSTSEGSI) is disordered. The interval 77-236 (SHETNASGGD…LITSNRRSIP (160 aa)) is necessary for PINK1-dependent localization to mitochondria. Thr-80 carries the post-translational modification Phosphothreonine. Polar residues predominate over residues 80 to 96 (TNASGGDEPQSTSEGSI). The RING-type 0; atypical zinc finger occupies 140–224 (PTYNSFFIYC…PTSDKDTSVA (85 aa)). A Phosphothreonine; by PINK1 modification is found at Thr-174. The interval 203-237 (TRAEFFFKCGAHPTSDKDTSVALNLITSNRRSIPC) is SYT11 binding 1. Thr-216 carries the phosphothreonine modification. Residues 233-464 (RSIPCIACTD…ACMGDHWFDV (232 aa)) are TRIAD supradomain. The Zn(2+) site is built by Cys-237, Cys-240, Cys-252, His-256, Cys-259, Cys-262, Cys-288, Cys-292, Cys-331, and Cys-336. Residues 237-292 (CIACTDVRSPVLVFQCNHRHVICLDCFHLYCVTRLNDRQFVHDAQLGYSLPCVAGC) form an RING-type 1 zinc finger. Residues 256–292 (HVICLDCFHLYCVTRLNDRQFVHDAQLGYSLPCVAGC) form an SYT11 binding 2 region. The IBR-type zinc-finger motif lies at 312 to 376 (TRYQQYGAEE…CKEAYHEGDC (65 aa)). Lys-348 participates in a covalent cross-link: Glycyl lysine isopeptide (Lys-Gly) (interchain with G-Cter in ISG15). 4 residues coordinate Zn(2+): Cys-351, Cys-359, Cys-364, and Cys-367. Lys-368 is covalently cross-linked (Glycyl lysine isopeptide (Lys-Gly) (interchain with G-Cter in ISG15)). Zn(2+) is bound by residues His-372 and Cys-376. Residues 377–409 (DSLLEPSGATSQAYRVDKRAAEQARWEEASKET) form an REP region. Residues Cys-417 and Cys-420 each contribute to the Zn(2+) site. An RING-type 2; atypical zinc finger spans residues 417–448 (CPRCNVPIEKNGGCMHMKCPQPQCKLEWCWNC). Cys-430 is an active-site residue. 6 residues coordinate Zn(2+): Cys-435, Cys-440, Cys-445, Cys-448, Cys-456, and His-460.

The protein belongs to the RBR family. Parkin subfamily. As to quaternary structure, forms an E3 ubiquitin ligase complex with UBE2L3 or UBE2L6. Mediates 'Lys-63'-linked polyubiquitination by associating with UBE2V1. Part of a SCF-like complex, consisting of PRKN, CUL1 and FBXW7. Interacts with SNCAIP. Binds to the C2A and C2B domains of SYT11. Interacts and regulates the turnover of SEPTIN5. Part of a complex, including STUB1, HSP70 and GPR37. The amount of STUB1 in the complex increases during ER stress. STUB1 promotes the dissociation of HSP70 from PRKN and GPR37, thus facilitating PRKN-mediated GPR37 ubiquitination. HSP70 transiently associates with unfolded GPR37 and inhibits the E3 activity of PRKN, whereas, STUB1 enhances the E3 activity of PRKN through promotion of dissociation of HSP70 from PRKN-GPR37 complexes. Interacts with PSMD4 and PACRG. Interacts with LRRK2. Interacts with RANBP2. Interacts with SUMO1 but not SUMO2, which promotes nuclear localization and autoubiquitination. Interacts (via first RING-type domain) with AIMP2 (via N-terminus). Interacts with PSMA7 and RNF41. Interacts with PINK1. Forms a complex with PINK1 and PARK7. Interacts with CHPF, the interaction with isoform 2 may facilitate PRKN transport into the mitochondria. Interacts with MFN2 (phosphorylated), promotes PRKN localization in dysfunctional depolarized mitochondria. Interacts with FBXO7; this promotes translocation to dysfunctional depolarized mitochondria. Interacts with ZNF746. Interacts with heat shock protein 70 family members, including HSPA1L, HSPA1A and HSPA8; interaction HSPA1L promotes translocation to damaged mitochondria. Interacts with BAG4 and, to a lesser extent, BAG5; interaction with BAG4 inhibits translocation to damaged mitochondria. Forms a complex with PRKN and PARK7. Interacts with AMBRA1. Post-translationally, auto-ubiquitinates in an E2-dependent manner leading to its own degradation. Also polyubiquitinated by RNF41 for proteasomal degradation. S-nitrosylated. In terms of processing, phosphorylated. Activation requires phosphorylation at Ser-65 by PINK1 and binding to PINK1 phosphorylated ubiquitin. Phosphorylation at Thr-174 by PINK1 and at Thr-216 is important for mitochondrial localization. As to expression, expressed in all subdivisions of the brain (at protein level). Highly expressed in brainstem, cranial nerve, pontine, cerebellar nuclei, indusium griseum, nuclei reticularis, strata oriens and laccunosum moleculare of the hippocampal CA2 region. Low levels were found in the telencephalon and diencephalon. Expressed in heart, liver, skeletal muscle, kidney and testis.

The protein localises to the cytoplasm. It localises to the cytosol. The protein resides in the nucleus. Its subcellular location is the endoplasmic reticulum. It is found in the mitochondrion. The protein localises to the mitochondrion outer membrane. It localises to the cell projection. The protein resides in the neuron projection. Its subcellular location is the postsynaptic density. It is found in the presynapse. The enzyme catalyses [E2 ubiquitin-conjugating enzyme]-S-ubiquitinyl-L-cysteine + [acceptor protein]-L-lysine = [E2 ubiquitin-conjugating enzyme]-L-cysteine + [acceptor protein]-N(6)-ubiquitinyl-L-lysine.. It functions in the pathway protein modification; protein ubiquitination. Its activity is regulated as follows. In the autoinhibited state the side chain of Phe-462 inserts into a hydrophobic groove in RING-0, occluding the ubiquitin acceptor site Cys-430, whereas the REP repressor element binds RING-1 and blocks its E2-binding site. Activation of PRKN requires 2 steps: (1) phosphorylation at Ser-65 by PINK1 and (2) binding to phosphorylated ubiquitin, leading to unlock repression of the catalytic Cys-430 by the RING-0 region via an allosteric mechanism and converting PRKN to its fully-active form. According to another report, phosphorylation at Ser-65 by PINK1 is not essential for activation and only binding to phosphorylated ubiquitin is essential to unlock repression. In addition, ISG15 conjugation positively regulates its ubiquitin E3 ligase activity by suppressing the intramolecular interaction that maintains its autoinhibited conformation. Its function is as follows. Functions within a multiprotein E3 ubiquitin ligase complex, catalyzing the covalent attachment of ubiquitin moieties onto substrate proteins. Substrates include SYT11 and VDAC1. Other substrates are BCL2, CCNE1, GPR37, RHOT1/MIRO1, MFN1, MFN2, STUB1, SNCAIP, SEPTIN5, TOMM20, USP30, ZNF746, MIRO1 and AIMP2. Mediates monoubiquitination as well as 'Lys-6', 'Lys-11', 'Lys-48'-linked and 'Lys-63'-linked polyubiquitination of substrates depending on the context. Participates in the removal and/or detoxification of abnormally folded or damaged protein by mediating 'Lys-63'-linked polyubiquitination of misfolded proteins such as PARK7: 'Lys-63'-linked polyubiquitinated misfolded proteins are then recognized by HDAC6, leading to their recruitment to aggresomes, followed by degradation. Mediates 'Lys-63'-linked polyubiquitination of a 22 kDa O-linked glycosylated isoform of SNCAIP, possibly playing a role in Lewy-body formation. Mediates monoubiquitination of BCL2, thereby acting as a positive regulator of autophagy. Protects against mitochondrial dysfunction during cellular stress, by acting downstream of PINK1 to coordinate mitochondrial quality control mechanisms that remove and replace dysfunctional mitochondrial components. Depending on the severity of mitochondrial damage and/or dysfunction, activity ranges from preventing apoptosis and stimulating mitochondrial biogenesis to regulating mitochondrial dynamics and eliminating severely damaged mitochondria via mitophagy. Activation and recruitment onto the outer membrane of damaged/dysfunctional mitochondria (OMM) requires PINK1-mediated phosphorylation of both PRKN and ubiquitin. After mitochondrial damage, functions with PINK1 to mediate the decision between mitophagy or preventing apoptosis by inducing either the poly- or monoubiquitination of VDAC1, respectively; polyubiquitination of VDAC1 promotes mitophagy, while monoubiquitination of VDAC1 decreases mitochondrial calcium influx which ultimately inhibits apoptosis. When cellular stress results in irreversible mitochondrial damage, promotes the autophagic degradation of dysfunctional depolarized mitochondria (mitophagy) by promoting the ubiquitination of mitochondrial proteins such as TOMM20, RHOT1/MIRO1, MFN1 and USP30. Preferentially assembles 'Lys-6'-, 'Lys-11'- and 'Lys-63'-linked polyubiquitin chains, leading to mitophagy. The PINK1-PRKN pathway also promotes fission of damaged mitochondria by PINK1-mediated phosphorylation which promotes the PRKN-dependent degradation of mitochondrial proteins involved in fission such as MFN2. This prevents the refusion of unhealthy mitochondria with the mitochondrial network or initiates mitochondrial fragmentation facilitating their later engulfment by autophagosomes. Regulates motility of damaged mitochondria via the ubiquitination and subsequent degradation of MIRO1 and MIRO2; in motor neurons, this likely inhibits mitochondrial intracellular anterograde transport along the axons which probably increases the chance of the mitochondria undergoing mitophagy in the soma. Involved in mitochondrial biogenesis via the 'Lys-48'-linked polyubiquitination of transcriptional repressor ZNF746/PARIS which leads to its subsequent proteasomal degradation and allows activation of the transcription factor PPARGC1A. Limits the production of reactive oxygen species (ROS). Regulates cyclin-E during neuronal apoptosis. In collaboration with CHPF isoform 2, may enhance cell viability and protect cells from oxidative stress. Independently of its ubiquitin ligase activity, protects from apoptosis by the transcriptional repression of p53/TP53. May protect neurons against alpha synuclein toxicity, proteasomal dysfunction, GPR37 accumulation, and kainate-induced excitotoxicity. May play a role in controlling neurotransmitter trafficking at the presynaptic terminal and in calcium-dependent exocytosis. May represent a tumor suppressor gene. The sequence is that of E3 ubiquitin-protein ligase parkin from Mus musculus (Mouse).